A 951-amino-acid chain; its full sequence is Protein translocase subunit SecA (951 aa).

ATP-binding positions include glutamine 90, 108–112 (GEGKT), and aspartate 509.

It belongs to the SecA family. As to quaternary structure, monomer and homodimer. Part of the essential Sec protein translocation apparatus which comprises SecA, SecYEG and auxiliary proteins SecDF. Other proteins may also be involved.

The protein localises to the cell inner membrane. It is found in the cellular thylakoid membrane. Its subcellular location is the cytoplasm. It catalyses the reaction ATP + H2O + cellular proteinSide 1 = ADP + phosphate + cellular proteinSide 2.. Its function is as follows. Part of the Sec protein translocase complex. Interacts with the SecYEG preprotein conducting channel. Has a central role in coupling the hydrolysis of ATP to the transfer of proteins into and across the cell membrane, serving as an ATP-driven molecular motor driving the stepwise translocation of polypeptide chains across the membrane. In terms of biological role, probably participates in protein translocation into and across both the cytoplasmic and thylakoid membranes in cyanobacterial cells. In Prochlorococcus marinus (strain MIT 9303), this protein is Protein translocase subunit SecA.